The following is a 202-amino-acid chain: Na(+)-translocating NADH-quinone reductase subunit E (202 aa).

6 consecutive transmembrane segments (helical) span residues 11–31 (AVFIENLALSFFLGMCTFLAV), 35–55 (VTTSIGLGVAVIVVLGISVPV), 81–101 (FLRFLTFIGVIAALVQILEMA), 114–134 (GIFLPLITVNCAIFGAVSFMV), 144–164 (VVYGIGAGVGWALAITLLAGI), and 180–200 (LGITFITVGLMALGFMSFSGI).

It belongs to the NqrDE/RnfAE family. In terms of assembly, composed of six subunits; NqrA, NqrB, NqrC, NqrD, NqrE and NqrF.

It is found in the cell inner membrane. It catalyses the reaction a ubiquinone + n Na(+)(in) + NADH + H(+) = a ubiquinol + n Na(+)(out) + NAD(+). In terms of biological role, NQR complex catalyzes the reduction of ubiquinone-1 to ubiquinol by two successive reactions, coupled with the transport of Na(+) ions from the cytoplasm to the periplasm. NqrA to NqrE are probably involved in the second step, the conversion of ubisemiquinone to ubiquinol. The sequence is that of Na(+)-translocating NADH-quinone reductase subunit E from Pseudoalteromonas translucida (strain TAC 125).